The chain runs to 132 residues: Small ribosomal subunit protein uS8 (132 aa).

Belongs to the universal ribosomal protein uS8 family. In terms of assembly, part of the 30S ribosomal subunit. Contacts proteins S5 and S12.

Functionally, one of the primary rRNA binding proteins, it binds directly to 16S rRNA central domain where it helps coordinate assembly of the platform of the 30S subunit. This Caulobacter vibrioides (strain ATCC 19089 / CIP 103742 / CB 15) (Caulobacter crescentus) protein is Small ribosomal subunit protein uS8.